Here is a 219-residue protein sequence, read N- to C-terminus: ATP-dependent dethiobiotin synthetase BioD (219 aa).

12-17 (DLGKTH) serves as a coordination point for ATP. T16 contacts Mg(2+). Residue K37 is part of the active site. S41 is a substrate binding site. ATP-binding positions include D52, 115 to 118 (EGAG), and 175 to 176 (SE). Residues D52 and E115 each coordinate Mg(2+).

The protein belongs to the dethiobiotin synthetase family. As to quaternary structure, homodimer. Mg(2+) is required as a cofactor.

The protein localises to the cytoplasm. The enzyme catalyses (7R,8S)-7,8-diammoniononanoate + CO2 + ATP = (4R,5S)-dethiobiotin + ADP + phosphate + 3 H(+). It functions in the pathway cofactor biosynthesis; biotin biosynthesis; biotin from 7,8-diaminononanoate: step 1/2. Its function is as follows. Catalyzes a mechanistically unusual reaction, the ATP-dependent insertion of CO2 between the N7 and N8 nitrogen atoms of 7,8-diaminopelargonic acid (DAPA, also called 7,8-diammoniononanoate) to form a ureido ring. In Caulobacter vibrioides (strain ATCC 19089 / CIP 103742 / CB 15) (Caulobacter crescentus), this protein is ATP-dependent dethiobiotin synthetase BioD.